Reading from the N-terminus, the 340-residue chain is 3-isopropylmalate dehydrogenase (340 aa).

Arg-88, Arg-98, Arg-122, and Asp-212 together coordinate substrate. Mg(2+) contacts are provided by Asp-212, Asp-236, and Asp-240. Position 272-284 (272-284) interacts with NAD(+); it reads GSAPDIAGQGIAD.

The protein belongs to the isocitrate and isopropylmalate dehydrogenases family. LeuB type 2 subfamily. Homodimer. Mg(2+) serves as cofactor. Requires Mn(2+) as cofactor.

The protein resides in the cytoplasm. The enzyme catalyses (2R,3S)-3-isopropylmalate + NAD(+) = 4-methyl-2-oxopentanoate + CO2 + NADH. The protein operates within amino-acid biosynthesis; L-leucine biosynthesis; L-leucine from 3-methyl-2-oxobutanoate: step 3/4. Catalyzes the oxidation of 3-carboxy-2-hydroxy-4-methylpentanoate (3-isopropylmalate) to 3-carboxy-4-methyl-2-oxopentanoate. The product decarboxylates to 4-methyl-2 oxopentanoate. The polypeptide is 3-isopropylmalate dehydrogenase (leuB) (Corynebacterium glutamicum (strain ATCC 13032 / DSM 20300 / JCM 1318 / BCRC 11384 / CCUG 27702 / LMG 3730 / NBRC 12168 / NCIMB 10025 / NRRL B-2784 / 534)).